The primary structure comprises 334 residues: Malate dehydrogenase, cytoplasmic (334 aa).

11–17 (GAAGQIA) is a binding site for NAD(+). Arg92 and Arg98 together coordinate substrate. NAD(+) is bound by residues Asn105, Gln112, and 129-131 (VGN). Substrate-binding residues include Asn131 and Arg162. The Proton acceptor role is filled by His187.

This sequence belongs to the LDH/MDH superfamily. MDH type 2 family. In terms of assembly, homodimer.

The protein resides in the cytoplasm. Its subcellular location is the cytosol. It carries out the reaction (S)-malate + NAD(+) = oxaloacetate + NADH + H(+). It catalyses the reaction (S)-2-hydroxyglutarate + NAD(+) = 2-oxoglutarate + NADH + H(+). In terms of biological role, catalyzes the reduction of aromatic alpha-keto acids in the presence of NADH. Plays essential roles in the malate-aspartate shuttle and the tricarboxylic acid cycle, important in mitochondrial NADH supply for oxidative phosphorylation. Catalyzes the reduction of 2-oxoglutarate to 2-hydroxyglutarate, leading to elevated reactive oxygen species (ROS). The chain is Malate dehydrogenase, cytoplasmic (MDH1) from Gallus gallus (Chicken).